The following is a 120-amino-acid chain: Glycine cleavage system H protein (120 aa).

Residues 17–99 (VATVGITTYA…QGAGWFFKLK (83 aa)) form the Lipoyl-binding domain. Residue K58 is modified to N6-lipoyllysine.

The protein belongs to the GcvH family. The glycine cleavage system is composed of four proteins: P, T, L and H. Requires (R)-lipoate as cofactor.

Functionally, the glycine cleavage system catalyzes the degradation of glycine. The H protein shuttles the methylamine group of glycine from the P protein to the T protein. This Rhizobium etli (strain CIAT 652) protein is Glycine cleavage system H protein.